The sequence spans 83 residues: Putative membrane protein insertion efficiency factor (83 aa).

Positions 62–83 (KGGYDPVPPKSVKSAGNSKDSK) are disordered.

The protein belongs to the UPF0161 family.

The protein resides in the cell inner membrane. Its function is as follows. Could be involved in insertion of integral membrane proteins into the membrane. This chain is Putative membrane protein insertion efficiency factor, found in Chlorobaculum tepidum (strain ATCC 49652 / DSM 12025 / NBRC 103806 / TLS) (Chlorobium tepidum).